Here is a 342-residue protein sequence, read N- to C-terminus: N-acetyl-gamma-glutamyl-phosphate reductase (342 aa).

Residue cysteine 149 is part of the active site.

This sequence belongs to the NAGSA dehydrogenase family. Type 1 subfamily.

Its subcellular location is the cytoplasm. It carries out the reaction N-acetyl-L-glutamate 5-semialdehyde + phosphate + NADP(+) = N-acetyl-L-glutamyl 5-phosphate + NADPH + H(+). Its pathway is amino-acid biosynthesis; L-arginine biosynthesis; N(2)-acetyl-L-ornithine from L-glutamate: step 3/4. Its function is as follows. Catalyzes the NADPH-dependent reduction of N-acetyl-5-glutamyl phosphate to yield N-acetyl-L-glutamate 5-semialdehyde. This chain is N-acetyl-gamma-glutamyl-phosphate reductase, found in Thiobacillus denitrificans (strain ATCC 25259 / T1).